We begin with the raw amino-acid sequence, 692 residues long: Proprotein convertase subtilisin/kexin type 9 (692 aa).

Positions 1–30 (MGTVSSRRSWWPLPLLLLLLLLLGPAGARA) are cleaved as a signal peptide. The propeptide occupies 31–152 (QEDEDGDYEE…IEEDSSVFAQ (122 aa)). Position 38 is a sulfotyrosine (Tyr38). Ser47 bears the Phosphoserine mark. The Inhibitor I9 domain maps to 77 to 149 (TYVVVLKEET…VDYIEEDSSV (73 aa)). In terms of domain architecture, Peptidase S8 spans 155–461 (PWNLERITPP…GWQLFCRTVW (307 aa)). Residues Asp186 and His226 each act as charge relay system in the active site. Intrachain disulfides connect Cys223–Cys255 and Cys323–Cys358. Catalysis depends on Ser386, which acts as the Charge relay system. The segment at 450–692 (GAGWQLFCRT…HLAQASQELQ (243 aa)) is C-terminal domain. Disulfide bonds link Cys457–Cys527, Cys477–Cys526, and Cys486–Cys509. N-linked (GlcNAc...) asparagine glycosylation occurs at Asn533. 6 disulfides stabilise this stretch: Cys534/Cys601, Cys552/Cys600, Cys562/Cys588, Cys608/Cys679, Cys626/Cys678, and Cys635/Cys654. Ser688 carries the phosphoserine modification.

It belongs to the peptidase S8 family. In terms of assembly, monomer. Can self-associate to form dimers and higher multimers which may have increased LDLR degrading activity. The precursor protein but not the mature protein may form multimers. Interacts with APOB, VLDLR, LRP8/APOER2 and BACE1. The full-length immature form (pro-PCSK9) interacts with SCNN1A, SCNN1B and SCNN1G. The pro-PCSK9 form (via C-terminal domain) interacts with LDLR. Interacts (via the C-terminal domain) with ANXA2 (via repeat Annexin 1); the interaction inhibits the degradation of LDLR. It depends on Ca(2+) as a cofactor. In terms of processing, cleavage by furin and PCSK5 generates a truncated inactive protein that is unable to induce LDLR degradation. Undergoes autocatalytic cleavage in the endoplasmic reticulum to release the propeptide from the N-terminus and the cleavage of the propeptide is strictly required for its maturation and activation. The cleaved propeptide however remains associated with the catalytic domain through non-covalent interactions, preventing potential substrates from accessing its active site. As a result, it is secreted from cells as a propeptide-containing, enzymatically inactive protein. Post-translationally, phosphorylation protects the propeptide against proteolysis.

Its subcellular location is the cytoplasm. It localises to the secreted. The protein localises to the endosome. It is found in the lysosome. The protein resides in the cell surface. Its subcellular location is the endoplasmic reticulum. It localises to the golgi apparatus. Its proteolytic activity is autoinhibited by the non-covalent binding of the propeptide to the catalytic domain. Inhibited by EGTA. In terms of biological role, crucial player in the regulation of plasma cholesterol homeostasis. Binds to low-density lipid receptor family members: low density lipoprotein receptor (LDLR), very low density lipoprotein receptor (VLDLR), apolipoprotein E receptor (LRP1/APOER) and apolipoprotein receptor 2 (LRP8/APOER2), and promotes their degradation in intracellular acidic compartments. Acts via a non-proteolytic mechanism to enhance the degradation of the hepatic LDLR through a clathrin LDLRAP1/ARH-mediated pathway. May prevent the recycling of LDLR from endosomes to the cell surface or direct it to lysosomes for degradation. Can induce ubiquitination of LDLR leading to its subsequent degradation. Inhibits intracellular degradation of APOB via the autophagosome/lysosome pathway in a LDLR-independent manner. Involved in the disposal of non-acetylated intermediates of BACE1 in the early secretory pathway. Inhibits epithelial Na(+) channel (ENaC)-mediated Na(+) absorption by reducing ENaC surface expression primarily by increasing its proteasomal degradation. Regulates neuronal apoptosis via modulation of LRP8/APOER2 levels and related anti-apoptotic signaling pathways. The polypeptide is Proprotein convertase subtilisin/kexin type 9 (PCSK9) (Pan paniscus (Pygmy chimpanzee)).